The chain runs to 367 residues: Uroporphyrinogen decarboxylase (367 aa).

Position 1 is an N-acetylmethionine (M1). Residues R37, A39, R41, R50, D86, Y164, S219, and H339 each contribute to the coproporphyrinogen I site. Coproporphyrinogen III-binding residues include R37, A39, and R41. Residues D86, Y164, S219, and H339 each contribute to the coproporphyrinogen III site.

This sequence belongs to the uroporphyrinogen decarboxylase family. Homodimer.

The protein localises to the cytoplasm. Its subcellular location is the cytosol. The enzyme catalyses uroporphyrinogen III + 4 H(+) = coproporphyrinogen III + 4 CO2. It carries out the reaction uroporphyrinogen I + 4 H(+) = coproporphyrinogen I + 4 CO2. Its pathway is porphyrin-containing compound metabolism; protoporphyrin-IX biosynthesis; coproporphyrinogen-III from 5-aminolevulinate: step 4/4. In terms of biological role, catalyzes the sequential decarboxylation of the four acetate side chains of uroporphyrinogen to form coproporphyrinogen and participates in the fifth step in the heme biosynthetic pathway. Isomer I or isomer III of uroporphyrinogen may serve as substrate, but only coproporphyrinogen III can ultimately be converted to heme. In vitro also decarboxylates pentacarboxylate porphyrinogen I. In Pongo abelii (Sumatran orangutan), this protein is Uroporphyrinogen decarboxylase.